Reading from the N-terminus, the 144-residue chain is FK506-binding protein 2 (144 aa).

The first 20 residues, 1–20 (MARIIVLIVAFMALIAGVFA), serve as a signal peptide directing secretion. The PPIase FKBP-type domain maps to 48-136 (GDTVSVHYTG…IFTTELVSID (89 aa)). Positions 141-144 (RDEL) match the Prevents secretion from ER motif.

Belongs to the FKBP-type PPIase family. FKBP2 subfamily.

It is found in the endoplasmic reticulum. It carries out the reaction [protein]-peptidylproline (omega=180) = [protein]-peptidylproline (omega=0). With respect to regulation, inhibited by both FK506 and rapamycin. In terms of biological role, PPIases accelerate the folding of proteins. It catalyzes the cis-trans isomerization of proline imidic peptide bonds in oligopeptides. The polypeptide is FK506-binding protein 2 (FPR2) (Yarrowia lipolytica (strain CLIB 122 / E 150) (Yeast)).